A 466-amino-acid chain; its full sequence is Eukaryotic translation initiation factor 3 subunit M (466 aa).

The interval 40 to 62 (EISPLLEPLRQQEQSDAEPDRKQ) is disordered. Residues 211 to 378 (AQTHILQALQ…SEFLVHRATY (168 aa)) form the PCI domain. The interval 424–466 (AAEEAAQGKSNDKGNKSGDRRQRHGNNQQSQQQQQPQEVAAAE) is disordered. The segment covering 433–443 (SNDKGNKSGDR) has biased composition (basic and acidic residues). Low complexity predominate over residues 451–460 (QQSQQQQQPQ).

The protein belongs to the eIF-3 subunit M family. As to quaternary structure, component of the eukaryotic translation initiation factor 3 (eIF-3) complex.

The protein localises to the cytoplasm. Functionally, component of the eukaryotic translation initiation factor 3 (eIF-3) complex, which is involved in protein synthesis of a specialized repertoire of mRNAs and, together with other initiation factors, stimulates binding of mRNA and methionyl-tRNAi to the 40S ribosome. The eIF-3 complex specifically targets and initiates translation of a subset of mRNAs involved in cell proliferation. In Aspergillus oryzae (strain ATCC 42149 / RIB 40) (Yellow koji mold), this protein is Eukaryotic translation initiation factor 3 subunit M.